Consider the following 449-residue polypeptide: Tripartite motif-containing protein 64 (449 aa).

The RING-type zinc finger occupies 15-56 (CCICVNYFIDPVTIDCGHSFCRPCLCLCSEEGRAPMRCPSCR). The B box-type zinc-finger motif lies at 87–128 (SSDNICVLHEETKELFCEADKRLLCGPCSESPEHMAHSHSPI). Zn(2+)-binding residues include Cys-92, His-95, Cys-114, and His-120. The stretch at 189–225 (LDEEEQRHLQALEREAEELFQQLQDSQVRMTQHLERM) forms a coiled coil. The 181-residue stretch at 269 to 449 (LTSWCITGVL…LRPFFCFGCT (181 aa)) folds into the B30.2/SPRY domain.

The protein belongs to the TRIM/RBCC family.

This Homo sapiens (Human) protein is Tripartite motif-containing protein 64 (TRIM64).